The chain runs to 421 residues: Mitochondrial tRNA-specific 2-thiouridylase 1 (421 aa).

ATP is bound by residues 10-17 (ALSGGVDS) and Met-36. The interaction with target base in tRNA stretch occupies residues 96-98 (NPD). The active-site Nucleophile is Cys-101. Cys-101 and Cys-222 are disulfide-bonded. ATP is bound at residue Gly-126. An interaction with tRNA region spans residues 171 to 173 (KDQ). Cys-222 functions as the Cysteine persulfide intermediate in the catalytic mechanism. An interaction with tRNA region spans residues 334 to 335 (RH). Residues 395–421 (KGQRRAGMATESPSDSPEDGPGLSPLL) form a disordered region.

It belongs to the MnmA/TRMU family. As to expression, ubiquitous. Abundantly expressed in tissues with high metabolic rates including heart, liver, kidney, and brain.

It localises to the mitochondrion. The enzyme catalyses 5-taurinomethyluridine(34) in tRNA + S-sulfanyl-L-cysteinyl-[protein] + AH2 + ATP = 5-taurinomethyl-2-thiouridine(34) in tRNA + L-cysteinyl-[protein] + A + AMP + diphosphate + H(+). In terms of biological role, catalyzes the 2-thiolation of uridine at the wobble position (U34) of mitochondrial tRNA(Lys), tRNA(Glu) and tRNA(Gln). Required for the formation of 5-taurinomethyl-2-thiouridine (tm5s2U) of mitochondrial tRNA(Lys), tRNA(Glu), and tRNA(Gln) at the wobble position. ATP is required to activate the C2 atom of the wobble base. The sequence is that of Mitochondrial tRNA-specific 2-thiouridylase 1 (TRMU) from Homo sapiens (Human).